A 492-amino-acid polypeptide reads, in one-letter code: Probable glycogen synthase 2 (492 aa).

Position 15 (K15) interacts with ADP-alpha-D-glucose.

It belongs to the glycosyltransferase 1 family. Bacterial/plant glycogen synthase subfamily.

The catalysed reaction is [(1-&gt;4)-alpha-D-glucosyl](n) + ADP-alpha-D-glucose = [(1-&gt;4)-alpha-D-glucosyl](n+1) + ADP + H(+). It functions in the pathway glycan biosynthesis; glycogen biosynthesis. Synthesizes alpha-1,4-glucan chains using ADP-glucose. The chain is Probable glycogen synthase 2 (glgA2) from Nostoc sp. (strain PCC 7120 / SAG 25.82 / UTEX 2576).